We begin with the raw amino-acid sequence, 20 residues long: Cytochrome c oxidase subunit 6A2, mitochondrial (20 aa).

The disordered stretch occupies residues 1–20; sequence ASGAKGDHGGAGASTXXLLT.

Belongs to the cytochrome c oxidase subunit 6A family. As to quaternary structure, component of the cytochrome c oxidase (complex IV, CIV), a multisubunit enzyme composed of 14 subunits. The complex is composed of a catalytic core of 3 subunits MT-CO1, MT-CO2 and MT-CO3, encoded in the mitochondrial DNA, and 11 supernumerary subunits COX4I, COX5A, COX5B, COX6A, COX6B, COX6C, COX7A, COX7B, COX7C, COX8 and NDUFA4, which are encoded in the nuclear genome. The complex exists as a monomer or a dimer and forms supercomplexes (SCs) in the inner mitochondrial membrane with NADH-ubiquinone oxidoreductase (complex I, CI) and ubiquinol-cytochrome c oxidoreductase (cytochrome b-c1 complex, complex III, CIII), resulting in different assemblies (supercomplex SCI(1)III(2)IV(1) and megacomplex MCI(2)III(2)IV(2)). As to expression, heart specific isoform.

It is found in the mitochondrion inner membrane. It participates in energy metabolism; oxidative phosphorylation. Functionally, component of the cytochrome c oxidase, the last enzyme in the mitochondrial electron transport chain which drives oxidative phosphorylation. The respiratory chain contains 3 multisubunit complexes succinate dehydrogenase (complex II, CII), ubiquinol-cytochrome c oxidoreductase (cytochrome b-c1 complex, complex III, CIII) and cytochrome c oxidase (complex IV, CIV), that cooperate to transfer electrons derived from NADH and succinate to molecular oxygen, creating an electrochemical gradient over the inner membrane that drives transmembrane transport and the ATP synthase. Cytochrome c oxidase is the component of the respiratory chain that catalyzes the reduction of oxygen to water. Electrons originating from reduced cytochrome c in the intermembrane space (IMS) are transferred via the dinuclear copper A center (CU(A)) of subunit 2 and heme A of subunit 1 to the active site in subunit 1, a binuclear center (BNC) formed by heme A3 and copper B (CU(B)). The BNC reduces molecular oxygen to 2 water molecules unsing 4 electrons from cytochrome c in the IMS and 4 protons from the mitochondrial matrix. Plays a role in the assembly and stabilization of complex IV. The protein is Cytochrome c oxidase subunit 6A2, mitochondrial (COX6A2) of Canis lupus familiaris (Dog).